The primary structure comprises 252 residues: Type IV pilus assembly protein PilF (252 aa).

An N-terminal signal peptide occupies residues 1–17 (MTVRAALVFLLAVGLTG). A lipid anchor (N-palmitoyl cysteine) is attached at cysteine 18. Residue cysteine 18 is the site of S-diacylglycerol cysteine attachment. TPR repeat units lie at residues 32 to 67 (GRDE…LEID), 84 to 101 (EMEP…LASD), 104 to 133 (NARV…EASQ), 139 to 171 (ERSR…LRLN), 174 to 203 (QPSV…LFAQ), and 208 to 235 (NARS…GLQL).

As to quaternary structure, interacts with PilQ; this interaction is essential for assemby of PilQ into secretins.

The protein localises to the cell outer membrane. In terms of biological role, essential component of the type IV pilus (T4P) that plays a role in surface and host cell adhesion, colonization, biofilm maturation, virulence, and twitching, a form of surface-associated motility facilitated by cycles of extension, adhesion, and retraction of T4P fibers. Plays an essential role in the outer membrane localization and assembly of PilQ into secretins which are dodecamers of PilQ. This is Type IV pilus assembly protein PilF (pilF) from Pseudomonas aeruginosa (strain ATCC 15692 / DSM 22644 / CIP 104116 / JCM 14847 / LMG 12228 / 1C / PRS 101 / PAO1).